The chain runs to 349 residues: MQTYGNSAVTYGWWAGNSGVTNRSGKFIAAHAAHTGLIAFWAGAFTLFELARFDPSVPMGHQPLIALPHLATLGIGFDETGTFVGGSAVVAVAVCHLVGSMAYGAGGLMHSLLFSSDMQESSVPQARKFKLEWDNPDNQTFILGHHLIFFGVACIWFVEWARIHGVYDPSIGAIRQVEYDLNLSHIWDHQFDFLTIDSLEDVMGGHAFLAFLEITGGAFHIATKQVGEYTKFKGAGLLSAEAILSWSLAGIGWMAVVAAFWSATNTTVYPVEWFGEPLALKFGISPYWVDTVDLGSAHTSRAWLANVHYYFGFFFIQGHLWHALRAMGFDFKRVTSALSNLDTASVSLK.

6 helical membrane-spanning segments follow: residues 27 to 47 (FIAA…AFTL), 57 to 77 (VPMG…GIGF), 89 to 109 (VVAV…GGLM), 202 to 222 (VMGG…FHIA), 242 to 262 (AILS…AFWS), and 304 to 324 (LANV…WHAL).

This sequence belongs to the PsbB/PsbC family. IsiA/Pcb subfamily. As to quaternary structure, the antenna complex consists of divinyl chlorophylls (a and b) and divinyl chlorophyll a/b binding proteins and binds more divinyl chlorophyll b than does the antenna complex from high-light-adapted Prochlorococcus. Divinyl chlorophyll a is required as a cofactor. Requires divinyl chlorophyll b as cofactor.

The protein localises to the cellular thylakoid membrane. In terms of biological role, the antenna complex functions as a light receptor, it captures and delivers excitation energy to photosystems II and I. The Prochlorales pcb genes are not related to higher plant LHCs. The protein is Divinyl chlorophyll a/b light-harvesting protein PcbA (pcbA) of Prochlorococcus marinus (strain NATL2A).